A 127-amino-acid chain; its full sequence is Small ribosomal subunit protein uS11 (127 aa).

This sequence belongs to the universal ribosomal protein uS11 family. Part of the 30S ribosomal subunit. Interacts with proteins S7 and S18. Binds to IF-3.

In terms of biological role, located on the platform of the 30S subunit, it bridges several disparate RNA helices of the 16S rRNA. Forms part of the Shine-Dalgarno cleft in the 70S ribosome. The protein is Small ribosomal subunit protein uS11 of Streptococcus agalactiae serotype Ia (strain ATCC 27591 / A909 / CDC SS700).